Here is a 235-residue protein sequence, read N- to C-terminus: MKKAVVVFSGGQDSTTCLVQALSRYDEVHAITFDYGQRHREEIETARRLASQLGIAAHKVMDVTMLGELAISALTRDEIPVSFELQDNGLPNTFVPGRNILFLTLAAIYAYQVGAEAVITGVCETDFSGYPDCRDEFVKALNQAVSLGLDRAIRFETPLMWLDKAETWALADHYGHLDTVRQQTLTCYNGIAGDGCGACPACDLRSRGLQQYLADKAGVAARLHQKTGLGEKSGC.

ATP is bound at residue 8 to 18; the sequence is FSGGQDSTTCL. Residues C187, C196, C199, and C202 each coordinate Zn(2+).

This sequence belongs to the QueC family. The cofactor is Zn(2+).

The enzyme catalyses 7-carboxy-7-deazaguanine + NH4(+) + ATP = 7-cyano-7-deazaguanine + ADP + phosphate + H2O + H(+). It participates in purine metabolism; 7-cyano-7-deazaguanine biosynthesis. Its function is as follows. Catalyzes the ATP-dependent conversion of 7-carboxy-7-deazaguanine (CDG) to 7-cyano-7-deazaguanine (preQ(0)). In Aeromonas hydrophila subsp. hydrophila (strain ATCC 7966 / DSM 30187 / BCRC 13018 / CCUG 14551 / JCM 1027 / KCTC 2358 / NCIMB 9240 / NCTC 8049), this protein is 7-cyano-7-deazaguanine synthase.